The primary structure comprises 302 residues: Homoserine O-acetyltransferase 1 (302 aa).

Residue C142 is the Acyl-thioester intermediate of the active site. Substrate contacts are provided by K163 and S192. The active-site Proton acceptor is H235. E237 is a catalytic residue. R249 is a substrate binding site.

Belongs to the MetA family.

Its subcellular location is the cytoplasm. The enzyme catalyses L-homoserine + acetyl-CoA = O-acetyl-L-homoserine + CoA. It participates in amino-acid biosynthesis; L-methionine biosynthesis via de novo pathway; O-acetyl-L-homoserine from L-homoserine: step 1/1. In terms of biological role, transfers an acetyl group from acetyl-CoA to L-homoserine, forming acetyl-L-homoserine. The protein is Homoserine O-acetyltransferase 1 of Ilyobacter polytropus (strain ATCC 51220 / DSM 2926 / LMG 16218 / CuHBu1).